The sequence spans 248 residues: Triosephosphate isomerase (248 aa).

9–11 (NWK) provides a ligand contact to substrate. Residue H94 is the Electrophile of the active site. The Proton acceptor role is filled by E166. Residues G172, S212, and 233–234 (GG) each bind substrate.

Belongs to the triosephosphate isomerase family. In terms of assembly, homodimer.

It localises to the cytoplasm. It catalyses the reaction D-glyceraldehyde 3-phosphate = dihydroxyacetone phosphate. Its pathway is carbohydrate biosynthesis; gluconeogenesis. It functions in the pathway carbohydrate degradation; glycolysis; D-glyceraldehyde 3-phosphate from glycerone phosphate: step 1/1. Involved in the gluconeogenesis. Catalyzes stereospecifically the conversion of dihydroxyacetone phosphate (DHAP) to D-glyceraldehyde-3-phosphate (G3P). The chain is Triosephosphate isomerase from Clostridium botulinum (strain Okra / Type B1).